The following is a 466-amino-acid chain: Protein hob1 (466 aa).

The region spanning 17–269 (LRSKFNVGEI…RGDVKDRAEA (253 aa)) is the BAR domain. 2 coiled-coil regions span residues 31 to 67 (IYED…LNHQ) and 177 to 204 (EKKL…LKEE). Positions 280–342 (PTYKRPGMGP…ASDYSTPSAG (63 aa)) are disordered. Residues 294–303 (ATASSSSSFS) are compositionally biased toward low complexity. Phosphoserine occurs at positions 298, 299, 301, and 303. The SH3 domain occupies 407–466 (PAAEHVVALYDYAAQAAGDLSFHAGDRIEVVSRTDNQNEWWIGRLNGAQGQFPGNYVQLE).

Functionally, has a role in DNA damage signaling as a part of stress response processes. The sequence is that of Protein hob1 (hob1) from Schizosaccharomyces pombe (strain 972 / ATCC 24843) (Fission yeast).